The primary structure comprises 554 residues: Potassium-transporting ATPase potassium-binding subunit (554 aa).

The next 12 membrane-spanning stretches (helical) occupy residues Met-1–Ala-21, Trp-59–Leu-79, Gly-131–Val-151, Val-174–Ile-194, Pro-246–Thr-266, Gly-279–Trp-299, Phe-323–Val-343, Gly-352–Val-372, Gly-375–Gly-395, Phe-412–Met-432, Ile-481–Gly-501, and Gly-525–Leu-545.

This sequence belongs to the KdpA family. As to quaternary structure, the system is composed of three essential subunits: KdpA, KdpB and KdpC.

It is found in the cell membrane. In terms of biological role, part of the high-affinity ATP-driven potassium transport (or Kdp) system, which catalyzes the hydrolysis of ATP coupled with the electrogenic transport of potassium into the cytoplasm. This subunit binds the extracellular potassium ions and delivers the ions to the membrane domain of KdpB through an intramembrane tunnel. The chain is Potassium-transporting ATPase potassium-binding subunit from Streptomyces griseus subsp. griseus (strain JCM 4626 / CBS 651.72 / NBRC 13350 / KCC S-0626 / ISP 5235).